A 67-amino-acid chain; its full sequence is Small ribosomal subunit protein bS21 (67 aa).

It belongs to the bacterial ribosomal protein bS21 family.

This is Small ribosomal subunit protein bS21 from Desulfovibrio desulfuricans (strain ATCC 27774 / DSM 6949 / MB).